Consider the following 87-residue polypeptide: Small ribosomal subunit protein uS17 (87 aa).

The protein belongs to the universal ribosomal protein uS17 family. As to quaternary structure, part of the 30S ribosomal subunit.

In terms of biological role, one of the primary rRNA binding proteins, it binds specifically to the 5'-end of 16S ribosomal RNA. This chain is Small ribosomal subunit protein uS17, found in Staphylococcus aureus (strain Mu3 / ATCC 700698).